A 253-amino-acid polypeptide reads, in one-letter code: Pre-mRNA-splicing factor SPF27 homolog (253 aa).

Residues 124–235 (KQYLQKNQRS…IDSFKKEAAE (112 aa)) adopt a coiled-coil conformation.

The protein belongs to the SPF27 family. As to quaternary structure, component of the multiprotein assembly MOS4-associated complex (MAC) at least composed of MOS4, CDC5 and PRL1. Interacts with CYCL1-1 and CDC5. Associated with the spliceosome. Interacts with ENY2.

Its subcellular location is the nucleus. Its function is as follows. Component of the MAC complex that probably regulates defense responses through transcriptional control and thereby is essential for plant innate immunity. Involved in mRNA splicing. This is Pre-mRNA-splicing factor SPF27 homolog (MOS4) from Arabidopsis thaliana (Mouse-ear cress).